The chain runs to 194 residues: Large ribosomal subunit protein bL25 (194 aa).

The protein belongs to the bacterial ribosomal protein bL25 family. CTC subfamily. As to quaternary structure, part of the 50S ribosomal subunit; part of the 5S rRNA/L5/L18/L25 subcomplex. Contacts the 5S rRNA. Binds to the 5S rRNA independently of L5 and L18.

Functionally, this is one of the proteins that binds to the 5S RNA in the ribosome where it forms part of the central protuberance. The sequence is that of Large ribosomal subunit protein bL25 from Neorickettsia sennetsu (strain ATCC VR-367 / Miyayama) (Ehrlichia sennetsu).